Consider the following 541-residue polypeptide: Transmembrane protein 151 homolog (541 aa).

3 helical membrane passes run 27–47 (GYGK…YATF), 73–93 (YNFV…MECW), and 254–274 (PWFL…SWPL). Positions 503–541 (ASISHSSSKDLKSLTLKSSSSNNNNNNSNNNNNDDPEHP) are disordered. Residues 515–535 (SLTLKSSSSNNNNNNSNNNNN) are compositionally biased toward low complexity.

It belongs to the TMEM151 family.

It is found in the membrane. The chain is Transmembrane protein 151 homolog from Caenorhabditis elegans.